The primary structure comprises 295 residues: Nucleotide-binding protein CMS1991 (295 aa).

Residue 19-26 participates in ATP binding; it reads GMSGAGRS. Residue 70-73 participates in GTP binding; the sequence is DVRG.

Belongs to the RapZ-like family.

Its function is as follows. Displays ATPase and GTPase activities. This Clavibacter sepedonicus (Clavibacter michiganensis subsp. sepedonicus) protein is Nucleotide-binding protein CMS1991.